The primary structure comprises 311 residues: MTDFSASPDLQDPTTHAGFVAIVGKPNVGKSTLLNAFLGTKVAPTSPRPQTTRRGVRGIYTLDNRQLIFVDTPGLHKPKDALGKYMNSEVHSALSDVDAVVWVVDLRHPPTDEDRLVANSVRDLPKPLFLVGNKTDAAKYPEEAMKLYGALLEGRGSDLPVSETMLSAQNSVNAVATLREQLLEVLPENPFFFPQGAASDQSREMWAAEIIREEAMKKLRDELPYAVATRVNRWTEREDGLQRIEGEIIVEKNAHKGMVIGAGGKQLREIGQAARKQLEVFLNHKVYLGLEVIVIPGWREDEEALRELGYE.

Residues 16 to 188 enclose the Era-type G domain; that stretch reads HAGFVAIVGK…REQLLEVLPE (173 aa). The tract at residues 24–31 is G1; that stretch reads GKPNVGKS. GTP is bound at residue 24-31; it reads GKPNVGKS. Residues 50–54 form a G2 region; it reads QTTRR. Residues 71–74 are G3; it reads DTPG. GTP contacts are provided by residues 71–75 and 133–136; these read DTPGL and NKTD. A G4 region spans residues 133-136; sequence NKTD. Residues 166-168 form a G5 region; sequence LSA. Residues 219 to 296 enclose the KH type-2 domain; sequence LRDELPYAVA…YLGLEVIVIP (78 aa).

It belongs to the TRAFAC class TrmE-Era-EngA-EngB-Septin-like GTPase superfamily. Era GTPase family. As to quaternary structure, monomer.

The protein resides in the cytoplasm. The protein localises to the cell membrane. Functionally, an essential GTPase that binds both GDP and GTP, with rapid nucleotide exchange. Plays a role in 16S rRNA processing and 30S ribosomal subunit biogenesis and possibly also in cell cycle regulation and energy metabolism. This is GTPase Era from Deinococcus radiodurans (strain ATCC 13939 / DSM 20539 / JCM 16871 / CCUG 27074 / LMG 4051 / NBRC 15346 / NCIMB 9279 / VKM B-1422 / R1).